The sequence spans 530 residues: DEK domain-containing chromatin-associated protein 2 (530 aa).

Basic and acidic residues-rich tracts occupy residues 1 to 47 (MATE…AEEE) and 57 to 68 (AKEGELGEKDKE). A disordered region spans residues 1–130 (MATETLDEKT…PSKSVSIEKG (130 aa)). Positions 41 to 61 (IGEAEEEKKEDEEEGEAKEGE) form a coiled coil. The span at 69 to 82 (DDVESEEEEEEEEG) shows a compositional bias: acidic residues. Basic and acidic residues-rich tracts occupy residues 83 to 93 (SGSKKSSEKET) and 100 to 110 (RPTRERKKVER). Residues 185–205 (EKEEEKQRARIKEKIDKCVKE) adopt a coiled-coil conformation. The disordered stretch occupies residues 246 to 430 (IIADQEKAKK…GKAKAEPTRK (185 aa)). Positions 253–263 (AKKRKSTPKRG) are enriched in basic residues. A Nuclear localization signal 1 motif is present at residues 260 to 267 (PKRGKSGE). Residues 286–332 (SDTEEGKDEGDADSEGTNDPHEEDDAAPEEESDHEKTDTDDEKDEVE) are compositionally biased toward acidic residues. Short sequence motifs (nuclear localization signal) lie at residues 343–350 (SKKTVEES) and 384–391 (AKKQKVDH). The segment covering 374–384 (KQIAKSTSSPA) has biased composition (polar residues). Over residues 387–397 (QKVDHVESSKE) the composition is skewed to basic and acidic residues. Residues 426 to 481 (EPTRKEMLEVVSKILKEVDFNTATLSDILQKLSDHFGVELSHRKPEVKDVITEAIN) enclose the DEK-C domain. 2 DNA-binding regions span residues 444-458 (DFNTATLSDILQKLS) and 473-477 (KDVIT). Positions 482 to 530 (AMTDDEEEDEEEEAEAGSDKEKEEVKGEEEEEKAEAESDKEKEKEEPKD) are disordered. The span at 484–497 (TDDEEEDEEEEAEA) shows a compositional bias: acidic residues. A coiled-coil region spans residues 492–527 (EEEAEAGSDKEKEEVKGEEEEEKAEAESDKEKEKEE). A compositionally biased stretch (basic and acidic residues) spans 516 to 530 (EAESDKEKEKEEPKD).

In terms of assembly, found in a mRNA splicing-dependent exon junction complex (EJC). Binds specifically histones H3 and H4.

Its subcellular location is the nucleus. The protein resides in the nucleolus. Chromatin-associated protein which contributes to the modulation of chromatin structure (such as super-helical structure of DNA) and function. Binds to chromatin of protein-coding genes throughout the genome to regulate nucleosome occupancy and chromatin accessibility, and to modulate the expression of target genes. This Arabidopsis thaliana (Mouse-ear cress) protein is DEK domain-containing chromatin-associated protein 2.